A 777-amino-acid polypeptide reads, in one-letter code: MMSTRTFGETIEEYEVQHLLGKGGFASVYKARCLHSHQDVAIKMIDKKLIQGTGLTSRVRQEVEIHSRLKHPSVLQLYTFFQDVNYVYLVLELAHNGELQRYMKQHLLRPFTESEGATILRQVVAGLLYLHSHNIMHRDISLSNLLLSKEMHIKIADFGLATQLKRPDERHMTMCGTPNYISPEVVSRLSHGLPADVWSVGCMLYTLLVGRPPFETEGVESTLNKVVMSEFMMPSHLSFEAQDLIHKLLKKSPHERITLEQVLRHPFLKRTVGGSSYSTTPGALNEFSQSLASSDSGIVTFASSDSRKSHRLRSVDNSSGQSMPQIMEEYLPSSNLGYDSKEHRPVYEQHGSYLPTPGDQLENRDAKWPGTNNLAPFTSDSDMIPSPVGEKRLLMPPLETKRLQPTRYKTKNAIMSILRTGEVVLEFVKFKVKYNEDRITDICRISEDGRRIIIYQPDPGRGLPIREHPPDPLIPSENCVYNYENLPNKHWKKYVYAARFVGLVKSKTPKITFFSSLGKCQLMETMTDFEVRFYSGAKLLKSSTDGVKVFNSNGAVLSDNGCAEARNLIDHGNECFSHCVNISNALELAQTKENTCFPVTIGRRPAADMHAGQRFDGLRDTTNFAYSTPKSNQGSINFSVSTISTTRSASDYNSNTPRLNMLAAHQNVPIKRITVPEIGIVTELSHGVVQVQFYDGSMVSVIPKVQGGGITYTQANGLSTHFGNNDDLPFAVRDRINQMPQLQMKLKCAPLLGNARSVDCHLMTPKTTTPFYNRMII.

The region spanning 14–268 (YEVQHLLGKG…LEQVLRHPFL (255 aa)) is the Protein kinase domain. Residues 20 to 28 (LGKGGFASV) and K43 each bind ATP. Residue D139 is the Proton acceptor of the active site. Over residues 371–381 (TNNLAPFTSDS) the composition is skewed to polar residues. Positions 371–390 (TNNLAPFTSDSDMIPSPVGE) are disordered. Residues 390–507 (EKRLLMPPLE…ARFVGLVKSK (118 aa)) enclose the Cryptic POLO box 1 (CPB1) domain. Positions 508–611 (TPKITFFSSL…GRRPAADMHA (104 aa)) constitute a Cryptic POLO box 2 (CPB2) domain. The 80-residue stretch at 669 to 748 (PIKRITVPEI…MPQLQMKLKC (80 aa)) folds into the POLO box domain.

The protein belongs to the protein kinase superfamily. Ser/Thr protein kinase family. CDC5/Polo subfamily. In terms of assembly, homodimer. Ubiquitinated by the SCF(Slimb) ubiquitin ligase complex; leading to its degradation by the proteasome during interphase and regulating centriole number and ensuring the block to centriole reduplication.

It is found in the cytoplasm. The protein resides in the cytoskeleton. The protein localises to the microtubule organizing center. Its subcellular location is the centrosome. It localises to the centriole. The enzyme catalyses L-seryl-[protein] + ATP = O-phospho-L-seryl-[protein] + ADP + H(+). It catalyses the reaction L-threonyl-[protein] + ATP = O-phospho-L-threonyl-[protein] + ADP + H(+). Functionally, serine/threonine-protein kinase that plays a central role in centriole duplication. Able to trigger procentriole formation on the surface of the mother centriole cylinder, using mother centriole as a platform, leading to the recruitment of centriole biogenesis proteins such as sas-6. When overexpressed, it is able to induce centrosome amplification through the simultaneous generation of multiple procentrioles adjoining each parental centriole during S phase. Centrosome amplification following overexpression can initiate tumorigenesis, highlighting the importance of centrosome regulation in cancers. The chain is Serine/threonine-protein kinase PLK4 (SAK) from Drosophila pseudoobscura pseudoobscura (Fruit fly).